A 357-amino-acid chain; its full sequence is Protein pelota homolog (357 aa).

Belongs to the eukaryotic release factor 1 family. Pelota subfamily. Monomer. It depends on a divalent metal cation as a cofactor.

It is found in the cytoplasm. Its function is as follows. May function in recognizing stalled ribosomes, interact with stem-loop structures in stalled mRNA molecules, and effect endonucleolytic cleavage of the mRNA. May play a role in the release non-functional ribosomes and degradation of damaged mRNAs. Has endoribonuclease activity. This chain is Protein pelota homolog, found in Methanocella arvoryzae (strain DSM 22066 / NBRC 105507 / MRE50).